An 800-amino-acid polypeptide reads, in one-letter code: Fibroblast growth factor receptor 3 (800 aa).

Residues 1-20 (MVPLCLLLYLATLVFPPVYS) form the signal peptide. One can recognise an Ig-like C2-type 1 domain in the interval 21–122 (AHLLSPEPTD…YTVKVIDSLS (102 aa)). Residues 21–363 (AHLLSPEPTD…EMEREDDYAD (343 aa)) are Extracellular-facing. C55 and C101 form a disulfide bridge. N-linked (GlcNAc...) asparagine glycans are attached at residues N77, N90, and N112. Positions 124-136 (GDDEDYDEDEDEA) are enriched in acidic residues. Residues 124 to 143 (GDDEDYDEDEDEAGNGNAEA) are disordered. 2 consecutive Ig-like C2-type domains span residues 144–237 (PYWT…YQLD) and 246–348 (PILQ…AWLT). C169 and C221 form a disulfide bridge. N218, N255, N287, N308, and N321 each carry an N-linked (GlcNAc...) asparagine glycan. C268 and C332 form a disulfide bridge. The chain crosses the membrane as a helical span at residues 364–384 (ILIYVTSCVLFILTMVIIILC). Over 385-800 (RMWINTQKTL…HHHSNGVIRT (416 aa)) the chain is Cytoplasmic. The Protein kinase domain occupies 460-739 (LTLGKPLGEG…RQLVEDHDRV (280 aa)). Residues 466 to 474 (LGEGCFGQV) and K496 contribute to the ATP site. The Proton acceptor role is filled by D605. Residues Y635, Y636, Y712, and Y748 each carry the phosphotyrosine; by autocatalysis modification. Polar residues predominate over residues 764 to 773 (DSNSTCSSGD). Residues 764–800 (DSNSTCSSGDDSVFAHDPLPEEPCLPKHHHSNGVIRT) form a disordered region.

This sequence belongs to the protein kinase superfamily. Tyr protein kinase family. Fibroblast growth factor receptor subfamily. As to quaternary structure, monomer. Homodimer after ligand binding. Autophosphorylated. Binding of FGF family members together with heparan sulfate proteoglycan or heparin promotes receptor dimerization and autophosphorylation on tyrosine residues. Autophosphorylation occurs in trans between the two FGFR molecules present in the dimer.

The protein localises to the cell membrane. It catalyses the reaction L-tyrosyl-[protein] + ATP = O-phospho-L-tyrosyl-[protein] + ADP + H(+). Its activity is regulated as follows. Present in an inactive conformation in the absence of bound ligand. Ligand binding leads to dimerization and activation by autophosphorylation on tyrosine residues. Tyrosine-protein kinase that acts as a cell-surface receptor for fibroblast growth factors and plays an essential role in the regulation of cell proliferation, differentiation and apoptosis. Plays an essential role in the regulation of chondrocyte differentiation, proliferation and apoptosis, and is required for normal skeleton development. Regulates both osteogenesis and postnatal bone mineralization by osteoblasts. Promotes apoptosis in chondrocytes, but can also promote cancer cell proliferation. Phosphorylates PLCG1, CBL and FRS2. Ligand binding leads to the activation of several signaling cascades. Activation of PLCG1 leads to the production of the cellular signaling molecules diacylglycerol and inositol 1,4,5-trisphosphate. Phosphorylation of FRS2 triggers recruitment of GRB2, GAB1, PIK3R1 and SOS1, and mediates activation of RAS, MAPK1/ERK2, MAPK3/ERK1 and the MAP kinase signaling pathway, as well as of the AKT1 signaling pathway. The protein is Fibroblast growth factor receptor 3 (fgfr3) of Danio rerio (Zebrafish).